Reading from the N-terminus, the 302-residue chain is Nodulation protein D 3 (302 aa).

Residues 6-63 (LDLNLLVALDALMIERNLTAAARSINLSQPAMSAAVRRLRSYFRDELFTMRGREFVPT) form the HTH lysR-type domain. Positions 23–42 (LTAAARSINLSQPAMSAAVR) form a DNA-binding region, H-T-H motif.

The protein belongs to the LysR transcriptional regulatory family.

In terms of biological role, nodD regulates the expression of the nodABCFE genes which encode other nodulation proteins. NodD is also a negative regulator of its own expression. Binds flavonoids as inducers. The protein is Nodulation protein D 3 (nodD3) of Rhizobium leguminosarum bv. phaseoli.